The following is a 164-amino-acid chain: ATP synthase B' chain, cyanelle (164 aa).

The chain crosses the membrane as a helical span at residues 26 to 46 (ATLPVMMVQLLVLMLILNAVF).

It belongs to the ATPase B chain family. F-type ATPases have 2 components, F(1) - the catalytic core - and F(0) - the membrane proton channel. F(1) has five subunits: alpha(3), beta(3), gamma(1), delta(1), epsilon(1). F(0) has four main subunits: a(1), b(1), b'(1) and c(10-14). The alpha and beta chains form an alternating ring which encloses part of the gamma chain. F(1) is attached to F(0) by a central stalk formed by the gamma and epsilon chains, while a peripheral stalk is formed by the delta, b and b' chains.

It is found in the plastid. The protein resides in the cyanelle thylakoid membrane. Its function is as follows. F(1)F(0) ATP synthase produces ATP from ADP in the presence of a proton or sodium gradient. F-type ATPases consist of two structural domains, F(1) containing the extramembraneous catalytic core and F(0) containing the membrane proton channel, linked together by a central stalk and a peripheral stalk. During catalysis, ATP synthesis in the catalytic domain of F(1) is coupled via a rotary mechanism of the central stalk subunits to proton translocation. Component of the F(0) channel, it forms part of the peripheral stalk, linking F(1) to F(0). The b'-subunit is a diverged and duplicated form of b found in plants and photosynthetic bacteria. This chain is ATP synthase B' chain, cyanelle, found in Cyanophora paradoxa.